We begin with the raw amino-acid sequence, 194 residues long: FK506-binding protein 3 (194 aa).

A signal peptide spans 1-19 (MNKFLIALLVLATLAVSFS). A PPIase FKBP-type domain is found at 44 to 133 (GDYISLKYVG…YFDLEVVSIE (90 aa)). Residues 148 to 168 (VGTIIAFSMLAGFIVLVKFII) traverse the membrane as a helical segment. The disordered stretch occupies residues 173 to 194 (DESNSKKPAPGKPKKTKAAKQN). Residues 184 to 194 (KPKKTKAAKQN) show a composition bias toward basic residues.

Belongs to the FKBP-type PPIase family.

It localises to the membrane. The catalysed reaction is [protein]-peptidylproline (omega=180) = [protein]-peptidylproline (omega=0). Inhibited by both FK506 and rapamycin. Functionally, PPIases accelerate the folding of proteins by catalyzing the cis-trans isomerization of proline imidic peptide bonds in oligopeptides. The polypeptide is FK506-binding protein 3 (fkbp3) (Dictyostelium discoideum (Social amoeba)).